A 464-amino-acid chain; its full sequence is Rab GDP-dissociation inhibitor (464 aa).

It belongs to the Rab GDI family. Interacts with the GDP-bound form of Rab GTPase YPT7.

Regulates the GDP/GTP exchange reaction of YPT7 by inhibiting the dissociation of GDP from it, and the subsequent binding of GTP to YTP7. The chain is Rab GDP-dissociation inhibitor (GDI1) from Pyricularia oryzae (strain 70-15 / ATCC MYA-4617 / FGSC 8958) (Rice blast fungus).